Here is a 555-residue protein sequence, read N- to C-terminus: Solute carrier family 22 member 2 (555 aa).

The Cytoplasmic segment spans residues 1–22; the sequence is MPTTVDDVLEHGGEFHFFQKQM. Residues 23 to 43 traverse the membrane as a helical segment; it reads FFLLALLSATFAPIYVGIVFL. At 44–150 the chain is on the extracellular side; sequence GFTPDHRCRS…LVCANSWMLD (107 aa). An N-linked (GlcNAc...) asparagine glycan is attached at asparagine 72. Residues 151–171 traverse the membrane as a helical segment; it reads LFQSSVNVGFFIGSMSIGYIA. Residues 172–177 are Cytoplasmic-facing; it reads DRFGRK. Residues 178 to 198 form a helical membrane-spanning segment; sequence LCLLTTVLINAAAGVLMAISP. Residues 199-208 are Extracellular-facing; sequence TYTWMLIFRL. The chain crosses the membrane as a helical span at residues 209-229; it reads IQGLVSKAGWLIGYILITEFV. Residues 230 to 238 are Cytoplasmic-facing; it reads GRRYRRTVG. The chain crosses the membrane as a helical span at residues 239 to 259; that stretch reads IFYQVAYTVGLLVLAGVAYAL. At 260 to 263 the chain is on the extracellular side; sequence PHWR. The chain crosses the membrane as a helical span at residues 264 to 284; the sequence is WLQFTVSLPNFFFLLYYWCIP. The Proline-rich sequence motif lies at 284–288; sequence PESPR. The Cytoplasmic portion of the chain corresponds to 285 to 348; the sequence is ESPRWLISQN…VRTPQIRKHT (64 aa). A helical membrane pass occupies residues 349–369; the sequence is MILMYNWFTSSVLYQGLIMHM. At 370 to 375 the chain is on the extracellular side; the sequence is GLAGDN. The helical transmembrane segment at 376–396 threads the bilayer; that stretch reads IYLDFFYSALVEFPAAFMIIL. Residues 397 to 414 are Cytoplasmic-facing; sequence TIDRIGRRYPWAASNMVA. A helical transmembrane segment spans residues 415–435; sequence GAACLASVFIPGDLQWLKIII. Residues 436 to 441 are Extracellular-facing; sequence SCLGRM. A helical transmembrane segment spans residues 442-462; sequence GITMAYEIVCLVNAELYPTFI. The Cytoplasmic segment spans residues 463–464; that stretch reads RN. Residues 465-485 traverse the membrane as a helical segment; it reads LGVHICSSMCDIGGIITPFLV. Over 486–494 the chain is Extracellular; it reads YRLTNIWLE. The helical transmembrane segment at 495–515 threads the bilayer; it reads LPLMVFGVLGLVAGGLVLLLP. Residues 516-555 lie on the Cytoplasmic side of the membrane; sequence ETKGKALPETIEEAENMQRPRKNKEKMIYLQVQKLDIPLN.

This sequence belongs to the major facilitator (TC 2.A.1) superfamily. Organic cation transporter (TC 2.A.1.19) family. In terms of processing, tyrosine phosphorylated by tyrosine-protein kinase YES1. As to expression, mainly expressed in kidney, in the cortex and medulla. Localized in testis, mostly to peritubular myoid cells and Leydig cells and also detected along the basal membrane of Sertoli cells. Expressed in brain, in neurons of the cerebral cortex and in various subcortical nuclei. In the brain, also detected in the dopaminergic regions of the substantia nigra. Expressed in tracheal and bronchial ciliated epithelium in the respiratory tract. Also detected in secretory phase endometrium, in scattered stromal cells. Expressed in spleen, placenta, small intestine and spinal cord. Weakly expressed in prostate, uterus and lung. Mainly expressed in kidney, bone marrow and testis. Expressed in colon, skeletal muscle, spinal cord, placenta and liver.

Its subcellular location is the basolateral cell membrane. The protein resides in the basal cell membrane. The protein localises to the apical cell membrane. The catalysed reaction is (R)-noradrenaline(out) = (R)-noradrenaline(in). It catalyses the reaction (R)-adrenaline(out) = (R)-adrenaline(in). It carries out the reaction serotonin(out) = serotonin(in). The enzyme catalyses dopamine(out) = dopamine(in). The catalysed reaction is histamine(out) = histamine(in). It catalyses the reaction thiamine(in) = thiamine(out). It carries out the reaction creatinine(in) = creatinine(out). The enzyme catalyses 1-methylnicotinamide(out) = 1-methylnicotinamide(in). The catalysed reaction is guanidine(out) = guanidine(in). It catalyses the reaction choline(out) = choline(in). It carries out the reaction agmatine(out) = agmatine(in). The enzyme catalyses putrescine(out) = putrescine(in). The catalysed reaction is spermidine(in) = spermidine(out). It catalyses the reaction tyramine(in) = tyramine(out). It carries out the reaction L-histidyl-L-proline diketopiperazine(in) = L-histidyl-L-proline diketopiperazine(out). The enzyme catalyses (R)-salsolinol(in) = (R)-salsolinol(out). The catalysed reaction is N-methyl-(R)-salsolinol(in) = N-methyl-(R)-salsolinol(out). It catalyses the reaction acetylcholine(in) = acetylcholine(out). It carries out the reaction prostaglandin F2alpha(out) = prostaglandin F2alpha(in). The enzyme catalyses prostaglandin E2(out) = prostaglandin E2(in). Tyrosine phosphorylation of the transporter leads to activation of the transport activity. TEA uptake is activated by tyrosine phosphorylation. Inhibited by cGMP, most likely through a cGMP-binding protein that interacts with OCT2. In terms of biological role, electrogenic voltage-dependent transporter that mediates the transport of a variety of organic cations such as endogenous bioactive amines, cationic drugs and xenobiotics. Functions as a Na(+)-independent, bidirectional uniporter. Cation cellular uptake or release is driven by the electrochemical potential, i.e. membrane potential and concentration gradient. However, may also engage electroneutral cation exchange when saturating concentrations of cation substrates are reached. Predominantly expressed at the basolateral membrane of hepatocytes and proximal tubules and involved in the uptake and disposition of cationic compounds by hepatic and renal clearance from the blood flow. Implicated in monoamine neurotransmitters uptake such as histamine, dopamine, adrenaline/epinephrine, noradrenaline/norepinephrine, serotonin and tyramine, thereby supporting a physiological role in the central nervous system by regulating interstitial concentrations of neurotransmitters. Also capable of transporting dopaminergic neuromodulators cyclo(his-pro), salsolinol and N-methyl-salsolinol, thereby involved in the maintenance of dopaminergic cell integrity in the central nervous system. Mediates the bidirectional transport of acetylcholine (ACh) at the apical membrane of ciliated cell in airway epithelium, thereby playing a role in luminal release of ACh from bronchial epithelium. Also transports guanidine and endogenous monoamines such as vitamin B1/thiamine, creatinine and N-1-methylnicotinamide (NMN). Mediates the uptake and efflux of quaternary ammonium compound choline. Mediates the bidirectional transport of polyamine agmatine and the uptake of polyamines putrescine and spermidine. Able to transport non-amine endogenous compounds such as prostaglandin E2 (PGE2) and prostaglandin F2-alpha (PGF2-alpha). Also involved in the uptake of xenobiotic 4-(4-(dimethylamino)styryl)-N-methylpyridinium (ASP). May contribute to regulate the transport of organic compounds in testis across the blood-testis-barrier. Functionally, in contrast with isoform 1, not able to transport guanidine, creatinine, cimetidine and metformin. The polypeptide is Solute carrier family 22 member 2 (Homo sapiens (Human)).